Here is a 496-residue protein sequence, read N- to C-terminus: Lysine--tRNA ligase (496 aa).

Residues Glu408 and Glu415 each contribute to the Mg(2+) site.

Belongs to the class-II aminoacyl-tRNA synthetase family. As to quaternary structure, homodimer. It depends on Mg(2+) as a cofactor.

It is found in the cytoplasm. The catalysed reaction is tRNA(Lys) + L-lysine + ATP = L-lysyl-tRNA(Lys) + AMP + diphosphate. This is Lysine--tRNA ligase from Legionella pneumophila (strain Paris).